The primary structure comprises 221 residues: uncharacterized protein (221 aa).

This is an uncharacterized protein from Treponema pallidum (strain Nichols).